A 354-amino-acid polypeptide reads, in one-letter code: Guanine nucleotide-binding protein alpha-12 subunit (354 aa).

The 324-residue stretch at 31-354 (QPLKLLLLGS…SLLMNVAEIL (324 aa)) folds into the G-alpha domain. A G1 motif region spans residues 34–47 (KLLLLGSGECGKST). Residues 39–46 (GSGECGKS), 178–184 (LRVRVKT), 203–207 (DVGGQ), 272–275 (NKID), and Ala329 contribute to the GTP site. 2 residues coordinate Mg(2+): Ser46 and Thr184. A G2 motif region spans residues 176–184 (DFLRVRVKT). A G3 motif region spans residues 199 to 208 (FKLVDVGGQK). Residues 268–275 (VLFFNKID) are G4 motif. The interval 327 to 332 (TCALDS) is G5 motif.

Belongs to the G-alpha family. G proteins are composed of 3 units; alpha, beta and gamma. The alpha chain contains the guanine nucleotide binding site.

Its function is as follows. Guanine nucleotide-binding proteins (G proteins) are involved as modulators or transducers in various transmembrane signaling systems. The protein is Guanine nucleotide-binding protein alpha-12 subunit (gpaL) of Dictyostelium discoideum (Social amoeba).